A 285-amino-acid polypeptide reads, in one-letter code: Aquaporin PIP2-5 (285 aa).

2 helical membrane-spanning segments follow: residues 38–58 and 75–95; these read AVIA…ATVI and CGGV…FILV. Positions 107–109 match the NPA 1 motif; that stretch reads NPA. The next 3 helical transmembrane spans lie at 126 to 146, 168 to 188, and 202 to 222; these read LLYI…VKGF, GTGL…VFSA, and VLAP…TIPI. Residues 228–230 carry the NPA 2 motif; the sequence is NPA. The chain crosses the membrane as a helical span at residues 250 to 270; that stretch reads IFWVGPFIGAAIAAAYHQYVL.

This sequence belongs to the MIP/aquaporin (TC 1.A.8) family. PIP (TC 1.A.8.11) subfamily. Homomers. May interact with PIP1-2 to form heteromers. In terms of tissue distribution, specifically expressed in roots, in the exodermis, endodermis and xylem parenchyma. Polar localization to the external periclinal side of epidermal cells in root apices.

The protein resides in the cell membrane. Functionally, water channel required to facilitate the transport of water across cell membrane. Its function is impaired by Hg(2+). May play a role in water uptake from the root surface. Active as homomers. Increased activity when heteromerization with PIP1-2. This is Aquaporin PIP2-5 (PIP2-5) from Zea mays (Maize).